Here is a 203-residue protein sequence, read N- to C-terminus: Small ribosomal subunit protein uS4c (203 aa).

Residues 18–42 (LPGLTSKRPKNRKDSMNMNRSSSRK) are disordered. The segment covering 33-42 (MNMNRSSSRK) has biased composition (polar residues). Positions 91-152 (MRLDNIIFRL…QPRLRAIIKK (62 aa)) constitute an S4 RNA-binding domain.

It belongs to the universal ribosomal protein uS4 family. As to quaternary structure, part of the 30S ribosomal subunit. Contacts protein S5. The interaction surface between S4 and S5 is involved in control of translational fidelity.

Its subcellular location is the plastid. The protein localises to the chloroplast. Functionally, one of the primary rRNA binding proteins, it binds directly to 16S rRNA where it nucleates assembly of the body of the 30S subunit. Its function is as follows. With S5 and S12 plays an important role in translational accuracy. The polypeptide is Small ribosomal subunit protein uS4c (rps4) (Pinus koraiensis (Korean pine)).